The following is a 667-amino-acid chain: Fatty acyl-CoA synthetase A (667 aa).

Belongs to the ATP-dependent AMP-binding enzyme family.

The protein resides in the endosome membrane. It catalyses the reaction a long-chain fatty acid + ATP + CoA = a long-chain fatty acyl-CoA + AMP + diphosphate. Functionally, long chain fatty acid acyl-CoA synthetases catalyze the formation of a thiester bond between a free fatty acid and coenzyme A during fatty acid metabolic process. May mediate fatty acid retrieval from the lumen of endosomes into the cytoplasm. The protein is Fatty acyl-CoA synthetase A (fcsA) of Dictyostelium discoideum (Social amoeba).